A 317-amino-acid chain; its full sequence is ATP synthase gamma chain (317 aa).

The protein belongs to the ATPase gamma chain family. In terms of assembly, F-type ATPases have 2 components, CF(1) - the catalytic core - and CF(0) - the membrane proton channel. CF(1) has five subunits: alpha(3), beta(3), gamma(1), delta(1), epsilon(1). CF(0) has three main subunits: a, b and c.

The protein localises to the cellular thylakoid membrane. In terms of biological role, produces ATP from ADP in the presence of a proton gradient across the membrane. The gamma chain is believed to be important in regulating ATPase activity and the flow of protons through the CF(0) complex. The polypeptide is ATP synthase gamma chain (Acaryochloris marina (strain MBIC 11017)).